The chain runs to 305 residues: UDP-3-O-acyl-N-acetylglucosamine deacetylase (305 aa).

Positions 79, 238, and 242 each coordinate Zn(2+). His-265 functions as the Proton donor in the catalytic mechanism.

Belongs to the LpxC family. It depends on Zn(2+) as a cofactor.

It carries out the reaction a UDP-3-O-[(3R)-3-hydroxyacyl]-N-acetyl-alpha-D-glucosamine + H2O = a UDP-3-O-[(3R)-3-hydroxyacyl]-alpha-D-glucosamine + acetate. Its pathway is glycolipid biosynthesis; lipid IV(A) biosynthesis; lipid IV(A) from (3R)-3-hydroxytetradecanoyl-[acyl-carrier-protein] and UDP-N-acetyl-alpha-D-glucosamine: step 2/6. In terms of biological role, catalyzes the hydrolysis of UDP-3-O-myristoyl-N-acetylglucosamine to form UDP-3-O-myristoylglucosamine and acetate, the committed step in lipid A biosynthesis. This chain is UDP-3-O-acyl-N-acetylglucosamine deacetylase, found in Proteus mirabilis (strain HI4320).